Reading from the N-terminus, the 648-residue chain is Fidgetin-like protein 2 (648 aa).

The segment at 1-36 (MHWTPEHAQPLNQWPEQHLDVSSTTPSPAHKLELPP) is disordered. The segment covering 10–27 (PLNQWPEQHLDVSSTTPS) has biased composition (polar residues). ATP-binding positions include alanine 394 and 434-439 (GCGKAL).

The protein belongs to the AAA ATPase family. It depends on Mg(2+) as a cofactor.

Its subcellular location is the cytoplasm. The protein localises to the cell cortex. It catalyses the reaction ATP + H2O = ADP + phosphate + H(+). Functionally, microtubule-severing enzyme that negatively regulates cell migration and wound healing. In migrating cells, targets dynamic microtubules (MTs) at the leading edge and severs them, thereby suppressing motility. Microtubule severing releases ARHGEF2 which activates RHOA, which in turn regulates focal ahesion turnover via focal adhesion kinase, as opposed to F-actin polymerization, to suppress cell motility. Negative regulator of axon regeneration that suppresses axonal growth by selectively severing dynamic MTs in the distal axon shaft and growth cone. Contributes to proper cell branching during endothelial and neuronal development. In Rattus norvegicus (Rat), this protein is Fidgetin-like protein 2 (Fignl2).